The sequence spans 429 residues: Chaperone SurA (429 aa).

Positions 1–18 (MFKRIALVCALFSGVCFA) are cleaved as a signal peptide. PpiC domains lie at 170–271 (NLTY…KLVA) and 281–380 (ITQT…EVIA).

It is found in the periplasm. It catalyses the reaction [protein]-peptidylproline (omega=180) = [protein]-peptidylproline (omega=0). Chaperone involved in the correct folding and assembly of outer membrane proteins. Recognizes specific patterns of aromatic residues and the orientation of their side chains, which are found more frequently in integral outer membrane proteins. May act in both early periplasmic and late outer membrane-associated steps of protein maturation. The protein is Chaperone SurA of Legionella pneumophila (strain Lens).